A 602-amino-acid chain; its full sequence is Arginine--tRNA ligase (602 aa).

Residues 124 to 134 (ANPTGPVHVGR) carry the 'HIGH' region motif.

It belongs to the class-I aminoacyl-tRNA synthetase family.

The protein localises to the cytoplasm. It carries out the reaction tRNA(Arg) + L-arginine + ATP = L-arginyl-tRNA(Arg) + AMP + diphosphate. The chain is Arginine--tRNA ligase from Halorubrum lacusprofundi (strain ATCC 49239 / DSM 5036 / JCM 8891 / ACAM 34).